The chain runs to 399 residues: Dual-specificity RNA methyltransferase RlmN (399 aa).

Catalysis depends on E122, which acts as the Proton acceptor. Residues 128–371 (ETDRGTLCVS…VRTPRGRDIL (244 aa)) form the Radical SAM core domain. An intrachain disulfide couples C135 to C374. [4Fe-4S] cluster is bound by residues C142, C146, and C149. S-adenosyl-L-methionine-binding positions include 200–201 (GE), S232, 254–256 (SLH), and N331. Catalysis depends on C374, which acts as the S-methylcysteine intermediate.

The protein belongs to the radical SAM superfamily. RlmN family. [4Fe-4S] cluster serves as cofactor.

The protein localises to the cytoplasm. It carries out the reaction adenosine(2503) in 23S rRNA + 2 reduced [2Fe-2S]-[ferredoxin] + 2 S-adenosyl-L-methionine = 2-methyladenosine(2503) in 23S rRNA + 5'-deoxyadenosine + L-methionine + 2 oxidized [2Fe-2S]-[ferredoxin] + S-adenosyl-L-homocysteine. The enzyme catalyses adenosine(37) in tRNA + 2 reduced [2Fe-2S]-[ferredoxin] + 2 S-adenosyl-L-methionine = 2-methyladenosine(37) in tRNA + 5'-deoxyadenosine + L-methionine + 2 oxidized [2Fe-2S]-[ferredoxin] + S-adenosyl-L-homocysteine. In terms of biological role, specifically methylates position 2 of adenine 2503 in 23S rRNA and position 2 of adenine 37 in tRNAs. m2A2503 modification seems to play a crucial role in the proofreading step occurring at the peptidyl transferase center and thus would serve to optimize ribosomal fidelity. In Rhodopseudomonas palustris (strain BisB18), this protein is Dual-specificity RNA methyltransferase RlmN.